A 335-amino-acid polypeptide reads, in one-letter code: UPF0104 membrane protein PH1989 (335 aa).

Helical transmembrane passes span 4-24, 34-54, 62-82, 122-142, 148-168, 231-251, 266-286, and 304-324; these read YLLIIIGVTLVLILLWWAGIE, DIRFILLAILMYCISVLIWAV, GANINVSFVKVIEGVFIGIFL, ILDVIPVVVFMMLAFLYALTI, LIILGISAIILVIILLMTTVF, LYSFILWGADILKTYFIFLSL, ASIAVAMISVIPGGIGITEVV, and VTMLDRLISFWIPTLLGGILV.

It belongs to the UPF0104 family.

Its subcellular location is the cell membrane. In Pyrococcus horikoshii (strain ATCC 700860 / DSM 12428 / JCM 9974 / NBRC 100139 / OT-3), this protein is UPF0104 membrane protein PH1989.